Consider the following 323-residue polypeptide: Extracellular endo-alpha-(1-&gt;5)-L-arabinanase 1 (323 aa).

A signal peptide spans 1–32 (MKKKKTWKRFLHFSSAALAAGLIFTSAAPAEA). Asp-44 serves as the catalytic Proton acceptor. Asp-44 contacts substrate. Asp-107 is a Ca(2+) binding site. Residues Gly-125 and 160–163 (NAID) each bind substrate. A Ca(2+)-binding site is contributed by Glu-165. A substrate-binding site is contributed by 180 to 182 (SFW). The active-site Proton donor is Glu-215. Asp-287 contributes to the Ca(2+) binding site.

The protein belongs to the glycosyl hydrolase 43 family. Ca(2+) is required as a cofactor.

It is found in the secreted. The enzyme catalyses Endohydrolysis of (1-&gt;5)-alpha-arabinofuranosidic linkages in (1-&gt;5)-arabinans.. Its pathway is glycan metabolism; L-arabinan degradation. Its function is as follows. Involved in the degradation of arabinan and is a key enzyme in the complete degradation of the plant cell wall. Catalyzes the internal cleavage of alpha-(1-&gt;5)-L-arabinofuranosyl residues of linear 1,5-alpha-L-arabinan and of branched sugar beet arabinan. It displays no activity against heavily substituted arabinans or a range of other polysaccharides (larch wood arabinogalactan, wheat arabinoxylan and p-nitrophenyl-alpha-L-arabinofuranoside). The enzyme activity is progressively reduced as alpha-(1-&gt;5)-chains become shorter or more highly substituted. This chain is Extracellular endo-alpha-(1-&gt;5)-L-arabinanase 1 (abnA), found in Bacillus subtilis (strain 168).